The primary structure comprises 397 residues: MAKAKFQRTKPHVNIGTLGHVDHGKTTLTAAISKVLADKYPSATNVQRDFASIDSAPEERQRGITINISHVEYETPKRHYAHVDAPGHADYIKNMITGAAQMDGAILVVAATDGPMAQTREHVLLAKQVGVPYLLVALNKSDMVDDEEILELVELEVRELLSSQDYLGDDAPVVRVSGLKALEGDEKWVQSVLDLMEAVDNNIPDPVRDKDKPFLMPVEDVFTITGRGTVVTGRAERGTLAVNSEVEIVGIRPTQKTTVTGIEMFHKQLDEAWAGENCGLLLRGTKREDVERGQVVVKPGSVTPHTSFEGTAYILSKDEGGRNNPIYTNYRPQFYFRTTDVTGVISLTEGTEMVMPGDTTDMTVELIQPIAMEEGLGFAIREGGRTVGAGKVTKIIN.

The tr-type G domain maps to 10–207 (KPHVNIGTLG…AVDNNIPDPV (198 aa)). A G1 region spans residues 19 to 26 (GHVDHGKT). Position 19–26 (19–26 (GHVDHGKT)) interacts with GTP. Thr-26 is a Mg(2+) binding site. The segment at 63–67 (GITIN) is G2. A G3 region spans residues 84–87 (DAPG). GTP-binding positions include 84–88 (DAPGH) and 139–142 (NKSD). A G4 region spans residues 139–142 (NKSD). Residues 177 to 179 (SGL) form a G5 region.

This sequence belongs to the TRAFAC class translation factor GTPase superfamily. Classic translation factor GTPase family. EF-Tu/EF-1A subfamily. As to quaternary structure, monomer.

It localises to the cytoplasm. It catalyses the reaction GTP + H2O = GDP + phosphate + H(+). GTP hydrolase that promotes the GTP-dependent binding of aminoacyl-tRNA to the A-site of ribosomes during protein biosynthesis. The sequence is that of Elongation factor Tu from Leifsonia xyli subsp. xyli (strain CTCB07).